Consider the following 1168-residue polypeptide: Homeodomain-interacting protein kinase 2 (1168 aa).

Phosphoserine is present on Ser-16. Lys-32 is covalently cross-linked (Glycyl lysine isopeptide (Lys-Gly) (interchain with G-Cter in SUMO); alternate). A Glycyl lysine isopeptide (Lys-Gly) (interchain with G-Cter in SUMO2); alternate cross-link involves residue Lys-32. Residues Ser-97–Leu-230 form a transcriptional corepression region. Ser-118 and Ser-135 each carry phosphoserine. Thr-141 carries the post-translational modification Phosphothreonine. An interaction with DAXX region spans residues His-189–Glu-520. Residues Tyr-199–Val-527 enclose the Protein kinase domain. ATP-binding positions include Leu-205–Val-213 and Lys-228. 2 positions are modified to phosphothreonine: Thr-252 and Thr-273. Asp-324 acts as the Proton acceptor in catalysis. Residue Tyr-361 is modified to Phosphotyrosine. Ser-441 carries the post-translational modification Phosphoserine. A phosphothreonine mark is found at Thr-482, Thr-517, and Thr-566. The interval Thr-539–Met-816 is interaction with SKI and SMAD1. The interval Pro-595–Ser-772 is interaction with DAZAP2. Phosphoserine is present on residues Ser-607 and Ser-641. Thr-660 carries the phosphothreonine modification. Positions Arg-724–Glu-869 are interaction with POU4F1. Residues His-746 to Val-848 are interaction with CTBP1. An interaction with HMGA1 region spans residues Val-759–Glu-869. The tract at residues Arg-764–Ser-820 is disordered. Residues Gln-765 to Val-791 are compositionally biased toward polar residues. The short motif at Arg-774–Lys-777 is the Nuclear localization signal 1 (NLS1) element. Phosphoserine is present on residues Ser-787 and Ser-799. Low complexity predominate over residues Thr-792–Gln-801. Positions Lys-804–Lys-807 match the Nuclear localization signal 2 (NLS2) motif. The interaction with TP53 and TP73 stretch occupies residues Pro-812–Pro-907. Residues Gln-845–Thr-879 form an interaction with UBE2I region. The segment at Gln-845 to Leu-952 is localization to nuclear speckles. A required for localization to nuclear speckles region spans residues Gln-845–Leu-952. Residues Ser-854–Pro-876 form an interaction with UBL1 region. The interval Thr-856 to Val-880 is SUMO interaction motifs (SIM); required for nuclear localization and kinase activity. The interval His-894–Pro-936 is disordered. Residues Asp-895–Ser-909 show a composition bias toward low complexity. Position 906 is a phosphoserine (Ser-906). An interaction with AXIN1 region spans residues Pro-907–Thr-1022. Residues Val-910 to Asp-923 show a composition bias toward polar residues. Residues Lys-925 and Lys-945 each participate in a glycyl lysine isopeptide (Lys-Gly) (interchain with G-Cter in SUMO2) cross-link. Positions Asp-956–Ile-1168 are autoinhibitory domain (AID). Residues Pro-960–Arg-1030 are disordered. A Phosphoserine modification is found at Ser-963. Composition is skewed to low complexity over residues Gly-965 to Ser-991 and Gln-998 to Pro-1018. 3 positions are modified to phosphoserine: Ser-1014, Ser-1125, and Ser-1158. A Glycyl lysine isopeptide (Lys-Gly) (interchain with G-Cter in SUMO) cross-link involves residue Lys-1161.

The protein belongs to the protein kinase superfamily. CMGC Ser/Thr protein kinase family. HIPK subfamily. In terms of assembly, interacts with CREB1, SIAH1, WSB1, CBX4, TRADD, p53/TP53, TP73, TP63, CREBBP, DAXX, P53DINP1, SKI, SMAD1, SMAD2 and SMAD3, but not SMAD4. Interacts with ATF1, PML, RUNX1, EP300, NKX1-2, NKX2-5, UBE2I, HMGA1, CTBP1, AXIN1, NLK, MYB, POU4F1, POU4F2, POU4F3, UBE2I, UBL1 and ZBTB4. Probably part of a complex consisting of p53/TP53, HIPK2 and AXIN1. Interacts with SP100; positively regulates TP53-dependent transcription. Interacts with DAZAP2; the interaction results in phosphorylation of DAZAP2 which causes localization of DAZAP2 to the nucleus, reduces interaction of DAZAP2 with HIPK2 and prevents DAZAP2-dependent degradation of HIPK2. Interacts with SIAH1; the interaction is promoted by DAZAP2 and results in SIAH1-mediated ubiquitination and subsequent proteasomal degradation of HIPK2. Post-translationally, autophosphorylation at Tyr-361 in the activation loop activates the kinase and promotes nuclear localization. Sumoylated. When conjugated it is directed to nuclear speckles. Desumoylated by SENP1. Sumoylation on Lys-32 is promoted by the E3 SUMO-protein ligase CBX4. In terms of processing, ubiquitinated by FBXO3, WSB1 and SIAH1, leading to rapid proteasome-dependent degradation. The degradation mediated by FBXO3, but not ubiquitination, is prevented in the presence of PML. The degradation mediated by WSB1 and SIAH1 is reversibly reduced upon DNA damage. Post-translationally, cleaved at Asp-895 and Asp-956 by CASP6 in a p53/TP53-dependent manner. The cleaved form lacks the autoinhibitory C-terminal domain (AID), resulting in a hyperactive kinase, which potentiates p53/TP53 Ser-46 phosphorylation and subsequent activation of the cell death machinery.

The protein resides in the nucleus. The protein localises to the PML body. It is found in the cytoplasm. It carries out the reaction L-seryl-[protein] + ATP = O-phospho-L-seryl-[protein] + ADP + H(+). The catalysed reaction is L-threonyl-[protein] + ATP = O-phospho-L-threonyl-[protein] + ADP + H(+). Serine/threonine-protein kinase involved in transcription regulation, p53/TP53-mediated cellular apoptosis and regulation of the cell cycle. Acts as a corepressor of several transcription factors, including SMAD1 and POU4F1/Brn3a and probably NK homeodomain transcription factors. Phosphorylates PDX1, ATF1, PML, p53/TP53, CREB1, CTBP1, CBX4, RUNX1, EP300, CTNNB1, HMGA1, ZBTB4 and DAZAP2. Inhibits cell growth and promotes apoptosis through the activation of p53/TP53 both at the transcription level and at the protein level (by phosphorylation and indirect acetylation). The phosphorylation of p53/TP53 may be mediated by a p53/TP53-HIPK2-AXIN1 complex. Involved in the response to hypoxia by acting as a transcriptional co-suppressor of HIF1A. Mediates transcriptional activation of TP73. In response to TGFB, cooperates with DAXX to activate JNK. Negative regulator through phosphorylation and subsequent proteasomal degradation of CTNNB1 and the antiapoptotic factor CTBP1. In the Wnt/beta-catenin signaling pathway acts as an intermediate kinase between MAP3K7/TAK1 and NLK to promote the proteasomal degradation of MYB. Phosphorylates CBX4 upon DNA damage and promotes its E3 SUMO-protein ligase activity. Activates CREB1 and ATF1 transcription factors by phosphorylation in response to genotoxic stress. In response to DNA damage, stabilizes PML by phosphorylation. PML, HIPK2 and FBXO3 may act synergically to activate p53/TP53-dependent transactivation. Promotes angiogenesis, and is involved in erythroid differentiation, especially during fetal liver erythropoiesis. Phosphorylation of RUNX1 and EP300 stimulates EP300 transcription regulation activity. Triggers ZBTB4 protein degradation in response to DNA damage. In response to DNA damage, phosphorylates DAZAP2 which localizes DAZAP2 to the nucleus, reduces interaction of DAZAP2 with HIPK2 and prevents DAZAP2-dependent ubiquitination of HIPK2 by E3 ubiquitin-protein ligase SIAH1 and subsequent proteasomal degradation. Modulates HMGA1 DNA-binding affinity. In response to high glucose, triggers phosphorylation-mediated subnuclear localization shifting of PDX1. Involved in the regulation of eye size, lens formation and retinal lamination during late embryogenesis. This chain is Homeodomain-interacting protein kinase 2 (Hipk2), found in Mesocricetus auratus (Golden hamster).